The chain runs to 501 residues: Dye-decolorizing peroxidase (501 aa).

An N-terminal signal peptide occupies residues 1-21; the sequence is MRLSPSFLSLALVIFVGEVVA. Positions 22-60 are excised as a propeptide; that stretch reads RNVVARASNPASVTGTRKVSLLKNVAGLPAVPTAQQVAV. D228 serves as the catalytic Proton acceptor. N352 carries N-linked (GlcNAc...) asparagine glycosylation. A heme-binding site is contributed by H367. Residue N403 is glycosylated (N-linked (GlcNAc...) asparagine).

Belongs to the DyP-type peroxidase family. Heme b serves as cofactor.

It localises to the secreted. It catalyses the reaction Reactive Blue 5 + 2 H2O2 = 2,2'-disulfonyl azobenzene + 3-[(4-amino-6-chloro-1,3,5-triazin-2-yl)amino]benzenesulfonate + phthalate + 2 H2O + 2 H(+). It carries out the reaction 2 a phenolic donor + H2O2 = 2 a phenolic radical donor + 2 H2O. Functionally, manganese-independent peroxidase that is able to convert a large number of compounds, but its physiological substrate is not known. In addition to classic peroxidase substrates (e.g. 2,6-dimethoxyphenol), oxidizes dyes such as Reactive Blue 5 and Reactive Black 5. The polypeptide is Dye-decolorizing peroxidase (Exidia glandulosa (Black witch's butter)).